An 829-amino-acid polypeptide reads, in one-letter code: RNA-directed RNA polymerase (829 aa).

The disordered stretch occupies residues 1-39; sequence MKEPVDCRLSTPAGFSGTVPPPGRTKAARPGTIPVRRSR.

As to quaternary structure, forms a ribonucleoprotein complex with the 20S RNA, where a single polymerase molecule binds to a single viral RNA genome. Since the viral RNA is not encapsidated, ribonucleoprotein complex formation appears to be the strategy to survive in the host as persistent virus.

It is found in the host cytoplasm. The catalysed reaction is RNA(n) + a ribonucleoside 5'-triphosphate = RNA(n+1) + diphosphate. Its function is as follows. RNA-directed RNA polymerase that replicates the viral (+) and (-) genome. This is RNA-directed RNA polymerase from Saccharomyces cerevisiae (Baker's yeast).